The following is a 124-amino-acid chain: Small ribosomal subunit protein uS13 (124 aa).

The interval 98-124 (VRGQRTKTNARTRKGPKRTIAGKKKAR) is disordered.

The protein belongs to the universal ribosomal protein uS13 family. Part of the 30S ribosomal subunit. Forms a loose heterodimer with protein S19. Forms two bridges to the 50S subunit in the 70S ribosome.

Its function is as follows. Located at the top of the head of the 30S subunit, it contacts several helices of the 16S rRNA. In the 70S ribosome it contacts the 23S rRNA (bridge B1a) and protein L5 of the 50S subunit (bridge B1b), connecting the 2 subunits; these bridges are implicated in subunit movement. Contacts the tRNAs in the A and P-sites. In Mycobacterium leprae (strain Br4923), this protein is Small ribosomal subunit protein uS13.